The sequence spans 732 residues: Elongation factor 2 (732 aa).

The region spanning 19-230 (ERIRNMGIAA…VSFKDIVELT (212 aa)) is the tr-type G domain. GTP is bound by residues 28–35 (AHIDHGKT), 94–98 (DTPGH), and 148–151 (NKVD). A Diphthamide modification is found at His597.

This sequence belongs to the TRAFAC class translation factor GTPase superfamily. Classic translation factor GTPase family. EF-G/EF-2 subfamily.

The protein localises to the cytoplasm. Catalyzes the GTP-dependent ribosomal translocation step during translation elongation. During this step, the ribosome changes from the pre-translocational (PRE) to the post-translocational (POST) state as the newly formed A-site-bound peptidyl-tRNA and P-site-bound deacylated tRNA move to the P and E sites, respectively. Catalyzes the coordinated movement of the two tRNA molecules, the mRNA and conformational changes in the ribosome. The sequence is that of Elongation factor 2 from Thermococcus gammatolerans (strain DSM 15229 / JCM 11827 / EJ3).